The sequence spans 141 residues: Large ribosomal subunit protein uL16 (141 aa).

The disordered stretch occupies residues M1 to R23.

The protein belongs to the universal ribosomal protein uL16 family. As to quaternary structure, part of the 50S ribosomal subunit.

Its function is as follows. Binds 23S rRNA and is also seen to make contacts with the A and possibly P site tRNAs. The sequence is that of Large ribosomal subunit protein uL16 from Helicobacter pylori (strain J99 / ATCC 700824) (Campylobacter pylori J99).